Reading from the N-terminus, the 1342-residue chain is DNA-directed RNA polymerase subunit beta (1342 aa).

The protein belongs to the RNA polymerase beta chain family. In terms of assembly, the RNAP catalytic core consists of 2 alpha, 1 beta, 1 beta' and 1 omega subunit. When a sigma factor is associated with the core the holoenzyme is formed, which can initiate transcription.

It carries out the reaction RNA(n) + a ribonucleoside 5'-triphosphate = RNA(n+1) + diphosphate. Functionally, DNA-dependent RNA polymerase catalyzes the transcription of DNA into RNA using the four ribonucleoside triphosphates as substrates. This Vibrio parahaemolyticus serotype O3:K6 (strain RIMD 2210633) protein is DNA-directed RNA polymerase subunit beta.